We begin with the raw amino-acid sequence, 424 residues long: MEKALLEIEEKARLARAASRPLSYASSAQKDAALKNIARCLLDNGPAILEANLKDQNEAKASGMLPAMLDRLIIDQSRLEGIAKDTFAIAALPDPVGEIFDMNTMPNGLIIGKKRVPLGVIAAIYESRPNVTVDIASLCLKAGNAVILRGGKETIHSNTILAKLIRQAVEQAGLPKEAVQFIENTDRNLVNHLLKLSDQIDLVIPRGGAGLISYVKQNSFIPVVAGGIGVVHVYVDANAKVTDAVNIAYNSKVQRPTVCNAMDTLLVHKDIAPVFLPAVAAEWSKAGVEIRADEAALKILENTFGCKLIPATPDDWGKEFLALIAAVKVVDSLDEALSHIARYGSGHTESIVTQNYTSSQRFLNEVDAAAVMVNASTRFTDGSQFGLGAELGISTQKMHARGPMGLKEITSYKWIVYGSGQIRG.

It belongs to the gamma-glutamyl phosphate reductase family.

The protein resides in the cytoplasm. The enzyme catalyses L-glutamate 5-semialdehyde + phosphate + NADP(+) = L-glutamyl 5-phosphate + NADPH + H(+). It functions in the pathway amino-acid biosynthesis; L-proline biosynthesis; L-glutamate 5-semialdehyde from L-glutamate: step 2/2. Catalyzes the NADPH-dependent reduction of L-glutamate 5-phosphate into L-glutamate 5-semialdehyde and phosphate. The product spontaneously undergoes cyclization to form 1-pyrroline-5-carboxylate. The polypeptide is Gamma-glutamyl phosphate reductase (Dehalococcoides mccartyi (strain ATCC BAA-2100 / JCM 16839 / KCTC 5957 / BAV1)).